The sequence spans 478 residues: Membrane-bound lytic murein transglycosylase F (478 aa).

A signal peptide spans 1–29; that stretch reads MFPDSSYLFSMRSLSRFLIAIFGCGALLA. Positions 30–269 are non-LT domain; the sequence is SCDSFERSVL…RLLDRYYGHI (240 aa). The tract at residues 271-478 is LT domain; sequence RLHHTDVNGI…RKEDDSWQEF (208 aa). The active site involves E316.

In the N-terminal section; belongs to the bacterial solute-binding protein 3 family. The protein in the C-terminal section; belongs to the transglycosylase Slt family.

It localises to the cell outer membrane. It catalyses the reaction Exolytic cleavage of the (1-&gt;4)-beta-glycosidic linkage between N-acetylmuramic acid (MurNAc) and N-acetylglucosamine (GlcNAc) residues in peptidoglycan, from either the reducing or the non-reducing ends of the peptidoglycan chains, with concomitant formation of a 1,6-anhydrobond in the MurNAc residue.. Functionally, murein-degrading enzyme that degrades murein glycan strands and insoluble, high-molecular weight murein sacculi, with the concomitant formation of a 1,6-anhydromuramoyl product. Lytic transglycosylases (LTs) play an integral role in the metabolism of the peptidoglycan (PG) sacculus. Their lytic action creates space within the PG sacculus to allow for its expansion as well as for the insertion of various structures such as secretion systems and flagella. This is Membrane-bound lytic murein transglycosylase F from Nitrosospira multiformis (strain ATCC 25196 / NCIMB 11849 / C 71).